A 92-amino-acid chain; its full sequence is Non-specific lipid-transfer protein 2 (92 aa).

4 cysteine pairs are disulfide-bonded: cysteine 4-cysteine 52, cysteine 14-cysteine 28, cysteine 29-cysteine 74, and cysteine 50-cysteine 88.

This sequence belongs to the plant LTP family. Expressed in seeds and, at very low levels, in pulp of fruit (at protein level).

Functionally, plant non-specific lipid-transfer proteins transfer phospholipids as well as galactolipids across membranes. May play a role in wax or cutin deposition in the cell walls of expanding epidermal cells and certain secretory tissues. The protein is Non-specific lipid-transfer protein 2 of Actinidia deliciosa (Kiwi).